A 153-amino-acid chain; its full sequence is UPF0260 protein YcgN (153 aa).

This sequence belongs to the UPF0260 family.

The polypeptide is UPF0260 protein YcgN (Escherichia coli O6:K15:H31 (strain 536 / UPEC)).